The primary structure comprises 212 residues: Cytidylate kinase (212 aa).

7–15 (GPAASGKGT) is an ATP binding site.

Belongs to the cytidylate kinase family. Type 1 subfamily.

The protein localises to the cytoplasm. The enzyme catalyses CMP + ATP = CDP + ADP. It catalyses the reaction dCMP + ATP = dCDP + ADP. The protein is Cytidylate kinase of Rhodopseudomonas palustris (strain BisB5).